Here is a 90-residue protein sequence, read N- to C-terminus: MLKRMYVKVYGIVQGVGFRRYVQIHAARLGIKGYAKNLPDGSVEIVAEGYEEALQKLLEYIKRGPPLSRVEKIEYRFYEYKGEFNNFDTY.

The region spanning 4 to 90 (RMYVKVYGIV…KGEFNNFDTY (87 aa)) is the Acylphosphatase-like domain. Catalysis depends on residues R19 and N37.

It belongs to the acylphosphatase family.

It catalyses the reaction an acyl phosphate + H2O = a carboxylate + phosphate + H(+). This chain is Acylphosphatase (acyP), found in Sulfurisphaera tokodaii (strain DSM 16993 / JCM 10545 / NBRC 100140 / 7) (Sulfolobus tokodaii).